The sequence spans 1072 residues: LRR receptor-like serine/threonine-protein kinase RGI5 (1072 aa).

Residues 1–21 (MERERSNFFFLFLFCSWVSMA) form the signal peptide. The Extracellular portion of the chain corresponds to 22–706 (QPTLSLSSDG…NGVKSPKIVA (685 aa)). A disulfide bond links Cys-56 and Cys-63. 25 LRR repeats span residues 66-89 (DNRVISVSIPDTFLNLSSIPDLSS), 90-113 (LSSLQFLNLSSTNLSGPIPPSFGK), 114-138 (LTHLRLLDLSSNSLSGPIPSELGRL), 140-162 (TLQFLILNANKLSGSIPSQISNL), 164-185 (ALQVLCLQDNLLNGSIPSSFGS), 187-211 (VSLQQFRLGGNTNLGGPIPAQLGFL), 212-234 (KNLTTLGFAASGLSGSIPSTFGN), 235-259 (LVNLQTLALYDTEISGTIPPQLGLC), 260-283 (SELRNLYLHMNKLTGSIPKELGKL), 285-307 (KITSLLLWGNSLSGVIPPEISNC), 308-331 (SSLVVFDVSANDLTGDIPGDLGKL), 332-355 (VWLEQLQLSDNMFTGQIPWELSNC), 356-379 (SSLIALQLDKNKLSGSIPSQIGNL), 381-402 (SLQSFFLWENSISGTIPSSFGN), 403-427 (CTDLVALDLSRNKLTGRIPEELFSL), 429-451 (RLSKLLLLGNSLSGGLPKSVAKC), 452-475 (QSLVRLRVGENQLSGQIPKEIGEL), 477-499 (NLVFLDLYMNHFSGGLPYEISNI), 500-523 (TVLELLDVHNNYITGDIPAQLGNL), 524-546 (VNLEQLDLSRNSFTGNIPLSFGN), 548-571 (SYLNKLILNNNLLTGQIPKSIKNL), 572-595 (QKLTLLDLSYNSLSGEIPQELGQV), 597-619 (SLTINLDLSYNTFTGNIPETFSD), 620-642 (LTQLQSLDLSSNSLHGDIKVLGS), and 643-667 (LTSLASLNISCNNFSGPIPSTPFFK). Residues Asn-80, Asn-97, and Asn-102 are each glycosylated (N-linked (GlcNAc...) asparagine). A Small peptide recognition motif is present at residues 171 to 172 (QD). Asn-176 carries an N-linked (GlcNAc...) asparagine glycan. The Small peptide recognition signature appears at 193 to 196 (RLGG). Residue Asn-213 is glycosylated (N-linked (GlcNAc...) asparagine). 3 short sequence motifs (small peptide recognition) span residues 216–221 (TLGFAA), Tyr-244, and 266–268 (YLH). Asn-306 is a glycosylation site (N-linked (GlcNAc...) asparagine). 2 consecutive short sequence motifs (small peptide recognition) follow at residues 314–317 (DVSA) and 336–338 (QLQ). Asn-354 is a glycosylation site (N-linked (GlcNAc...) asparagine). A Small peptide recognition motif is present at residues 384–388 (SFFLW). Asn-402 is a glycosylation site (N-linked (GlcNAc...) asparagine). Short sequence motifs (small peptide recognition) lie at residues 410–413 (DLSR), 432–436 (KLLLL), and 456–458 (RLR). N-linked (GlcNAc...) asparagine glycosylation is present at Asn-498. Asn-546 carries an N-linked (GlcNAc...) asparagine glycan. 2 N-linked (GlcNAc...) asparagine glycosylation sites follow: Asn-650 and Asn-655. Residues 707–727 (LTAVILASITIAILAAWLLIL) form a helical membrane-spanning segment. The Cytoplasmic segment spans residues 728–1072 (RNNHLYKTSQ…SQPLIKPSSS (345 aa)). A Phosphothreonine modification is found at Thr-764. The 296-residue stretch at 772–1067 (LTDENVIGKG…EWGKTSQPLI (296 aa)) folds into the Protein kinase domain. ATP-binding positions include 778-786 (IGKGCSGIV) and Lys-800. A phosphotyrosine mark is found at Tyr-851 and Tyr-887. Asp-900 serves as the catalytic Proton acceptor. At Ser-936 the chain carries Phosphoserine. Phosphotyrosine is present on residues Tyr-944 and Tyr-951. Thr-952 carries the phosphothreonine modification.

The protein belongs to the protein kinase superfamily. Ser/Thr protein kinase family. As to quaternary structure, binds to RGF1; this interaction triggers the formation of heterodimers with SERK1. Phosphorylated and ubiquitinated upon interaction with RGF1, thus leading to activation a subsequent degradation. Post-translationally, autophosphorylated. In terms of tissue distribution, expressed in roots and hypocotyls.

It is found in the membrane. The enzyme catalyses L-seryl-[protein] + ATP = O-phospho-L-seryl-[protein] + ADP + H(+). It carries out the reaction L-threonyl-[protein] + ATP = O-phospho-L-threonyl-[protein] + ADP + H(+). Functionally, together with RGI1, RGI2, RGI3 and RGI4, acts as a receptor of RGF1, a peptide hormone that maintains the postembryonic root stem cell niche by regulating the expression levels and patterns of the transcription factor PLETHORA (PLT). Links RGF1 signal with its downstream components. This chain is LRR receptor-like serine/threonine-protein kinase RGI5, found in Arabidopsis thaliana (Mouse-ear cress).